Reading from the N-terminus, the 175-residue chain is Ribosome maturation factor RimM (175 aa).

In terms of domain architecture, PRC barrel spans 96–172; it reads PDTYYDHQLE…LIEIDPPDGL (77 aa).

It belongs to the RimM family. In terms of assembly, binds ribosomal protein uS19.

It is found in the cytoplasm. An accessory protein needed during the final step in the assembly of 30S ribosomal subunit, possibly for assembly of the head region. Essential for efficient processing of 16S rRNA. May be needed both before and after RbfA during the maturation of 16S rRNA. It has affinity for free ribosomal 30S subunits but not for 70S ribosomes. This Mycobacterium avium (strain 104) protein is Ribosome maturation factor RimM.